The following is a 214-amino-acid chain: ATP phosphoribosyltransferase (214 aa).

This sequence belongs to the ATP phosphoribosyltransferase family. Short subfamily. In terms of assembly, heteromultimer composed of HisG and HisZ subunits.

The protein resides in the cytoplasm. It carries out the reaction 1-(5-phospho-beta-D-ribosyl)-ATP + diphosphate = 5-phospho-alpha-D-ribose 1-diphosphate + ATP. Its pathway is amino-acid biosynthesis; L-histidine biosynthesis; L-histidine from 5-phospho-alpha-D-ribose 1-diphosphate: step 1/9. Functionally, catalyzes the condensation of ATP and 5-phosphoribose 1-diphosphate to form N'-(5'-phosphoribosyl)-ATP (PR-ATP). Has a crucial role in the pathway because the rate of histidine biosynthesis seems to be controlled primarily by regulation of HisG enzymatic activity. This Lysinibacillus sphaericus (strain C3-41) protein is ATP phosphoribosyltransferase.